A 245-amino-acid polypeptide reads, in one-letter code: Peroxisome biogenesis protein 19-2 (245 aa).

The segment at 17 to 106 (ALDDFKDLNL…LSSKQQPTGS (90 aa)) is disordered. Composition is skewed to basic and acidic residues over residues 33–44 (VKKEEGDKKETE) and 71–92 (AKED…ETVK). A compositionally biased stretch (polar residues) spans 96–105 (SLSSKQQPTG). At cysteine 242 the chain carries Cysteine methyl ester. The S-farnesyl cysteine moiety is linked to residue cysteine 242. Positions 243–245 (CVM) are cleaved as a propeptide — removed in mature form.

The protein belongs to the peroxin-19 family. As to quaternary structure, dimer. Interacts with PEX10 (via C-terminus). Post-translationally, may be farnesylated. As to expression, expressed in roots, leaves, flowers, siliques and stems. Highest expression in roots and leaves.

It localises to the cytoplasm. The protein localises to the peroxisome membrane. Its function is as follows. Contributes to morphology determination of peroxisomes, but not to import of peroxisomal matrix proteins. Required for proper post-translational import and stabilization of peroxisomal membrane proteins (PMPs). Acts as a cytosolic import receptor for PMPs and delivers them to the docking factor PEX3 at the peroxisomal membrane for subsequent insertion into the membrane. Acts as a chaperone in stabilizing or maintaining PMPs in the lipid bilayer. This Arabidopsis thaliana (Mouse-ear cress) protein is Peroxisome biogenesis protein 19-2 (PEX19-2).